The chain runs to 401 residues: NADH-quinone oxidoreductase subunit D 2 (401 aa).

Belongs to the complex I 49 kDa subunit family. As to quaternary structure, NDH-1 is composed of 14 different subunits. Subunits NuoB, C, D, E, F, and G constitute the peripheral sector of the complex.

It localises to the cell inner membrane. It catalyses the reaction a quinone + NADH + 5 H(+)(in) = a quinol + NAD(+) + 4 H(+)(out). Functionally, NDH-1 shuttles electrons from NADH, via FMN and iron-sulfur (Fe-S) centers, to quinones in the respiratory chain. The immediate electron acceptor for the enzyme in this species is believed to be ubiquinone. Couples the redox reaction to proton translocation (for every two electrons transferred, four hydrogen ions are translocated across the cytoplasmic membrane), and thus conserves the redox energy in a proton gradient. The polypeptide is NADH-quinone oxidoreductase subunit D 2 (Thermodesulfovibrio yellowstonii (strain ATCC 51303 / DSM 11347 / YP87)).